A 233-amino-acid chain; its full sequence is H-2 class II histocompatibility antigen, A-S alpha chain (233 aa).

The tract at residues 1-88 is alpha-1; sequence EDDIEADHVG…KRSNSTPATN (88 aa). The Extracellular portion of the chain corresponds to 1-195; it reads EDDIEADHVG…IPAPMSELTE (195 aa). An alpha-2 region spans residues 89-182; that stretch reads EAPQATVFPK…GLEEPVLKHW (94 aa). The 93-residue stretch at 91–183 folds into the Ig-like C1-type domain; it reads PQATVFPKSP…LEEPVLKHWE (93 aa). Cysteine 111 and cysteine 167 form a disulfide bridge. Residue asparagine 122 is glycosylated (N-linked (GlcNAc...) asparagine). The connecting peptide stretch occupies residues 183–195; it reads EPEIPAPMSELTE. A helical membrane pass occupies residues 196–221; sequence TVVCALGLSVGLVGIVVGTIFIIQGL. Topologically, residues 222 to 233 are cytoplasmic; sequence RSGGTSRHPGPL.

This sequence belongs to the MHC class II family.

The protein localises to the membrane. The protein is H-2 class II histocompatibility antigen, A-S alpha chain (H2-Aa) of Mus musculus (Mouse).